The sequence spans 162 residues: uncharacterized protein (162 aa).

Positions 1–34 (MAREVISTSILMIATVVAVTAAIMVILPAVKDLA) are cleaved as a signal peptide.

This is an uncharacterized protein from Archaeoglobus fulgidus (strain ATCC 49558 / DSM 4304 / JCM 9628 / NBRC 100126 / VC-16).